The sequence spans 521 residues: CDP-diacylglycerol--glycerol-3-phosphate 3-phosphatidyltransferase (521 aa).

91–98 (ASLYLGKS) lines the ATP pocket. PLD phosphodiesterase domains lie at 177–203 (GLGL…SNDY) and 419–457 (NGWS…TRRA). Active-site residues include His182, Lys184, and Asp189.

The protein belongs to the CDP-alcohol phosphatidyltransferase class-II family.

It localises to the mitochondrion. The enzyme catalyses a CDP-1,2-diacyl-sn-glycerol + sn-glycerol 3-phosphate = a 1,2-diacyl-sn-glycero-3-phospho-(1'-sn-glycero-3'-phosphate) + CMP + H(+). The protein operates within phospholipid metabolism; phosphatidylglycerol biosynthesis; phosphatidylglycerol from CDP-diacylglycerol: step 1/2. In terms of biological role, essential for the viability of mitochondrial petite mutant. Catalyzes the committed step to the synthesis of the acidic phospholipids. The chain is CDP-diacylglycerol--glycerol-3-phosphate 3-phosphatidyltransferase (PGS1) from Saccharomyces cerevisiae (strain ATCC 204508 / S288c) (Baker's yeast).